The primary structure comprises 197 residues: Holliday junction branch migration complex subunit RuvA (197 aa).

Residues M1–L64 form a domain I region. Positions T65 to P143 are domain II. The flexible linker stretch occupies residues A144–Q153. The segment at Q153–R197 is domain III.

Belongs to the RuvA family. As to quaternary structure, homotetramer. Forms an RuvA(8)-RuvB(12)-Holliday junction (HJ) complex. HJ DNA is sandwiched between 2 RuvA tetramers; dsDNA enters through RuvA and exits via RuvB. An RuvB hexamer assembles on each DNA strand where it exits the tetramer. Each RuvB hexamer is contacted by two RuvA subunits (via domain III) on 2 adjacent RuvB subunits; this complex drives branch migration. In the full resolvosome a probable DNA-RuvA(4)-RuvB(12)-RuvC(2) complex forms which resolves the HJ.

It is found in the cytoplasm. The RuvA-RuvB-RuvC complex processes Holliday junction (HJ) DNA during genetic recombination and DNA repair, while the RuvA-RuvB complex plays an important role in the rescue of blocked DNA replication forks via replication fork reversal (RFR). RuvA specifically binds to HJ cruciform DNA, conferring on it an open structure. The RuvB hexamer acts as an ATP-dependent pump, pulling dsDNA into and through the RuvAB complex. HJ branch migration allows RuvC to scan DNA until it finds its consensus sequence, where it cleaves and resolves the cruciform DNA. In Solibacter usitatus (strain Ellin6076), this protein is Holliday junction branch migration complex subunit RuvA.